The chain runs to 62 residues: Large ribosomal subunit protein bL33 (62 aa).

It belongs to the bacterial ribosomal protein bL33 family.

The protein is Large ribosomal subunit protein bL33 of Bacteroides fragilis (strain ATCC 25285 / DSM 2151 / CCUG 4856 / JCM 11019 / LMG 10263 / NCTC 9343 / Onslow / VPI 2553 / EN-2).